The primary structure comprises 495 residues: Putative aldehyde dehydrogenase AldA (495 aa).

212–218 serves as a coordination point for NAD(+); sequence GKGSESG. Residues Glu-256 and Cys-290 contribute to the active site.

Belongs to the aldehyde dehydrogenase family.

The catalysed reaction is an aldehyde + NAD(+) + H2O = a carboxylate + NADH + 2 H(+). In Staphylococcus aureus (strain MSSA476), this protein is Putative aldehyde dehydrogenase AldA (aldA).